The following is a 687-amino-acid chain: MAVQVLRQMVYFLLSLFSLVQGAHSGSPREDFRFCGQRNQTQQSTLHYDQSSEPHIFVWNTEETLTIRAPFLAAPDIPRFFPEPRGLYHFCLYWSRHTGRLHLRYGKHDYLLSSQASRLLCFQKQEQSLKQGAPLIATSVSSWQIPQNTSLPGAPSFIFSFHNAPHKVSHNASVDMCDLKKELQQLSRYLQHPQKAAKRPTAAFISQQLQSLESKLTSVSFLGDTLSFEEDRVNATVWKLPPTAGLEDLHIHSQKEEEQSEVQAYSLLLPRAVFQQTRGRRRDDAKRLLVVDFSSQALFQDKNSSQVLGEKVLGIVVQNTKVTNLSDPVVLTFQHQPQPKNVTLQCVFWVEDPASSSTGSWSSAGCETVSRDTQTSCLCNHLTYFAVLMVSSTEVEATHKHYLTLLSYVGCVISALACVFTIAAYLCSRRKSRDYTIKVHMNLLSAVFLLDVSFLLSEPVALTGSEAACRTSAMFLHFSLLACLSWMGLEGYNLYRLVVEVFGTYVPGYLLKLSIVGWGFPVFLVTLVALVDVNNYGPIILAVRRTPERVTYPSMCWIRDSLVSYVTNLGLFSLVFLFNLAMLATMVVQILRLRPHSQNWPHVLTLLGLSLVLGLPWALVFFSFASGTFQLVILYLFSIITSFQGFLIFLWYWSMRFQAQGGPSPLKNNSDSAKLPISSGSTSSSRI.

A signal peptide spans M1–S25. Residue G26–R33 participates in heparin binding. The Extracellular portion of the chain corresponds to G26–Y402. Intrachain disulfides connect C35–C91 and C121–C177. 3 N-linked (GlcNAc...) asparagine glycosylation sites follow: N39, N148, and N171. L190–P200 contributes to the heparin binding site. The 172-residue stretch at D224–V395 folds into the GAIN-B domain. Residues N234, N303, N324, and N341 are each glycosylated (N-linked (GlcNAc...) asparagine). 2 disulfide bridges follow: C346–C377 and C366–C379. The interval C346 to V395 is GPS. The tract at residues Y384–A397 is stachel. A helical membrane pass occupies residues L403–A423. The Cytoplasmic segment spans residues A424–N442. A helical membrane pass occupies residues L443–T463. Topologically, residues G464–T471 are extracellular. The chain crosses the membrane as a helical span at residues S472 to Y492. The Cytoplasmic segment spans residues N493–K512. A helical transmembrane segment spans residues L513–V533. At N534–G570 the chain is on the extracellular side. Residues L571 to L591 form a helical membrane-spanning segment. At R592–V603 the chain is on the cytoplasmic side. A helical transmembrane segment spans residues L604–F624. Topologically, residues A625–Q630 are extracellular. Residues L631–W651 traverse the membrane as a helical segment. Over Y652 to I687 the chain is Cytoplasmic. The segment at S664–I687 is disordered. Over residues S678–I687 the composition is skewed to low complexity.

Belongs to the G-protein coupled receptor 2 family. LN-TM7 subfamily. Heterodimer of 2 chains generated by proteolytic processing; the large extracellular N-terminal fragment (ADGRG1 NT) and the membrane-bound C-terminal fragment (ADGRG1-CT) predominantly remain associated and non-covalently linked. ADGRG1 NT self-associates in a trans-trans manner; the homophilic interaction enhances receptor signaling. Interacts with TGM2. Interacts with heparin; leading to the reduction of ADGRG1 shedding. Interacts with COL3A1. Part of a GPCR-tetraspanin complex at least consisting of ADGRG1, CD81, eventually CD9, and GNA11 in which CD81 is enhancing the association of ADGRG1 with GNA11. In terms of processing, autoproteolytically cleaved into 2 fragments; the large extracellular N-terminal fragment and the membroune-bound C-terminal fragment predominantly remain associated and non-covalently linked. N-glycosylated. The secreted ADGRG1 N-terminal fragment is heavily glycosylated. Post-translationally, ubiquitinated. Undergoes polyubiquitination upon activation. Expressed in neural progenitor cells in fetal forbrain. Expressed in migrating neurons. Expressed in radial glial endfeet (at protein level). Expressed in peritubular myoid cells, Sertoli cells, and germ cells of the testis.

The protein localises to the cell membrane. It localises to the secreted. The protein resides in the membrane raft. Forms a heterodimer of 2 chains generated by proteolytic processing that remain associated through non-covalent interactions mediated by the GAIN-B domain. In the inactivated receptor, the Stachel sequence (also named stalk) is embedded in the GAIN-B domain, where it adopts a beta-strand conformation. On activation, the Stachel moves into the 7 transmembrane region and adopts a twisted hook-shaped configuration that forms contacts within the receptor, leading to coupling of a G-alpha protein, which activates signaling. The cleaved GAIN-B and N-terminal domains can then dissociate from the rest of the receptor. Activated by the small-molecule agonist, 3-alpha-acetoxydihydrodeoxygedunin (3-alpha-DOG). Functionally, adhesion G-protein coupled receptor (aGPCR) for steroid hormone 17alpha-hydroxypregnenolone (17-OH), which is involved in cell adhesion and cell-cell interactions. Ligand binding causes a conformation change that triggers signaling via guanine nucleotide-binding proteins (G proteins) and modulates the activity of downstream effectors, such as RhoA pathway. ADGRG1 is coupled to G(12) and/or G(13) G proteins (GNA12 and GNA13, respectively) and mediates the activation Rho small GTPases. Acts as a potent suppressor of ferroptosis: binding to 17-OH-binding initiates signaling that down-regulates CD36 and alleviates ferroptosis-induced liver injury. Ligand-binding also induces cell adhesion activity via association with proteins such as collagen III/COL3A1 and TGM2. Mediates cell matrix adhesion in developing neurons and hematopoietic stem cells. Involved in cortical development, specifically in maintenance of the pial basement membrane integrity and in cortical lamination: association with COL3A1 in the developing brain inhibits neuronal migration via activation of the RhoA pathway. Together with TGM2, acts as a regulator of myelination and myelin repair in oligodendrocyte precursor cells. Acts as a hemostatic sensor of shear force: G protein-coupled receptor signaling is activated in response to shear force in platelets, promoting G(13) G protein signaling, and platelet shape change and aggregation in a COL3A1-dependent manner. Acts as an inhibitor of VEGFA production thereby inhibiting angiogenesis through a signaling pathway mediated by PRKCA. Plays a role in the maintenance of hematopoietic stem cells in bone marrow niche. Plays an essential role in testis development. Its function is as follows. Adhesion G-protein coupled receptor (aGPCR) for phosphatidylserine, which is involved in microglia-mediated synapse pruning during development. Required to maintain appropriate synaptic numbers in several brain regions in a time- and circuit-dependent fashion: phosphatidylserine-binding acts as a 'eat-me' signal for apoptotic cells, leading to microglial engulfment of phosphatidylserine-positive synapses. This is Adhesion G-protein coupled receptor G1 from Mus musculus (Mouse).